The sequence spans 560 residues: Formate--tetrahydrofolate ligase (560 aa).

Residue 69-76 (TPAGEGKS) participates in ATP binding.

It belongs to the formate--tetrahydrofolate ligase family.

The catalysed reaction is (6S)-5,6,7,8-tetrahydrofolate + formate + ATP = (6R)-10-formyltetrahydrofolate + ADP + phosphate. Its pathway is one-carbon metabolism; tetrahydrofolate interconversion. This Listeria innocua serovar 6a (strain ATCC BAA-680 / CLIP 11262) protein is Formate--tetrahydrofolate ligase.